Consider the following 120-residue polypeptide: Transmembrane protein 010R (120 aa).

The next 2 membrane-spanning stretches (helical) occupy residues 40–60 and 72–92; these read FCGA…ATAT and SIFF…VWFL.

This sequence belongs to the IIV-6 010R family.

It localises to the membrane. The sequence is that of Transmembrane protein 010R from Invertebrate iridescent virus 6 (IIV-6).